We begin with the raw amino-acid sequence, 142 residues long: Small ribosomal subunit protein uS12 (142 aa).

This sequence belongs to the universal ribosomal protein uS12 family. Part of the 30S ribosomal subunit.

Its function is as follows. With S4 and S5 plays an important role in translational accuracy. Located at the interface of the 30S and 50S subunits. In Methanosarcina mazei (strain ATCC BAA-159 / DSM 3647 / Goe1 / Go1 / JCM 11833 / OCM 88) (Methanosarcina frisia), this protein is Small ribosomal subunit protein uS12.